The primary structure comprises 246 residues: MTLIEGVGDEVTVLFSVLACLLVLALAWVSTHTAEGGDPLPQPSGTPTPSQPSAAMAATDSMRGEAPGAETPSLRHRGQAAQPEPSTGFTATPPAPDSPQEPLVLRLKFLNDSEQVARAWPHDTIGSLKRTQFPGREQQVRLIYQGQLLGDDTQTLGSLHLPPNCVLHCHVSTRVGPPNPPCPPGSEPGPSGLEIGSLLLPLLLLLLLLLWYCQIQYRPFFPLTATLGLAGFTLLLSLLAFAMYRP.

The tract at residues 2–30 (TLIEGVGDEVTVLFSVLACLLVLALAWVS) is required to release iHOPS from membranes. Residues 11 to 31 (VTVLFSVLACLLVLALAWVST) form a helical membrane-spanning segment. Residues 34–101 (AEGGDPLPQP…TPPAPDSPQE (68 aa)) are disordered. Over residues 40–50 (LPQPSGTPTPS) the composition is skewed to pro residues. Position 71 is a phosphothreonine (threonine 71). Serine 73 carries the phosphoserine modification. Threonine 92 carries the phosphothreonine modification. Phosphoserine occurs at positions 98 and 127. The 74-residue stretch at 103 to 176 (LVLRLKFLND…LHCHVSTRVG (74 aa)) folds into the Ubiquitin-like domain. 2 helical membrane-spanning segments follow: residues 195–215 (IGSL…YCQI) and 221–241 (FPLT…LLAF).

In terms of assembly, interacts with EEF1A1, GRIA2, GRIP1, CAMLG, TUBG1. Interacts with NPM1 and CDKN2A; TMUB1 can enhance interaction between NPM1 and CDKN2A and is proposed to bridge the proteins; proposed to be mediated by iHOPS. Interacts with ERLIN2 and AMFR; TMUB1 promotes the interaction of ERLIN2 with AMFR. In terms of processing, processed by regulated intramembrane proteolysis (RIP)in the N-terminus to release iHOPS from membranes. In terms of tissue distribution, ubiquitously expressed with highest levels in mammary and thyroid glands, bone marrow and spleen; limited expression in cardiac, pancreatic and ovarian tissues.

It is found in the membrane. Its subcellular location is the postsynaptic cell membrane. The protein localises to the recycling endosome. It localises to the cytoplasm. The protein resides in the nucleus. It is found in the nucleolus. Its subcellular location is the cytoskeleton. The protein localises to the microtubule organizing center. It localises to the centrosome. Its function is as follows. Involved in sterol-regulated ubiquitination and degradation of HMG-CoA reductase HMGCR. Involved in positive regulation of AMPA-selective glutamate receptor GRIA2 recycling to the cell surface. Acts as a negative regulator of hepatocyte growth during regeneration. May contribute to the regulation of translation during cell-cycle progression. May contribute to the regulation of cell proliferation. May be involved in centrosome assembly. Modulates stabilization and nucleolar localization of tumor suppressor CDKN2A and enhances association between CDKN2A and NPM1. In Homo sapiens (Human), this protein is Transmembrane and ubiquitin-like domain-containing protein 1 (TMUB1).